The chain runs to 148 residues: Large ribosomal subunit protein bL9 (148 aa).

Belongs to the bacterial ribosomal protein bL9 family.

In terms of biological role, binds to the 23S rRNA. In Lachnoclostridium phytofermentans (strain ATCC 700394 / DSM 18823 / ISDg) (Clostridium phytofermentans), this protein is Large ribosomal subunit protein bL9.